Consider the following 636-residue polypeptide: MPPVRAEKKRKTDLIEQVCVTNKAGELVDLEDVLEYGPYSLTGILSSEKDEQEPLFDESIVLGYSIKISPVWTYNLKDVPEKETMSIWIVTPQRRYGILSPSSEYKAIYEQISEKNRLFYLIKTKFKDDMISGTLEDYDNYIEVLKEKLELPSCFQAILLVQKHIRFLLTQMVATSSLHVWSESPFFIRIRSSYEHLILQINKNIYNARQERKKSKLSSNNPSDNNTTMKSSLNQALTLINLPEQPFSISSPTATPQLGVVKRTSPLRFPLNDIWLSGLRIVDPNIESISLWKRIQVSTSPKHQRYISLQEVCSVIAQQLQITNLEALNKLSSHGETLLQIMHTAFTWRGTKLFNDIKHAIGFRSSVQQARSQFRGYCYDYLFMHCNNGEKTSLHLLRTLICMKLDFSNAQLAAKILFHFLLFDIGSGLSGSDYTYEQYINHSAVAFSFTEEIFEKNFVTVLPDFVKLFSISFGYWPAFSFYDELLKLLRNKYPKVYSSTPNLCDQVWLDRTNLFPCNRSTRSTLPYRPTKLLDLASASSCLSKKETDFKQDTGLYSYNLEKVEALKVSPDLQTGIWSCPVQNCLYFAVCDNPYKPSQVIYDHLLGHVDSKFIFKTPSNSVRSFTNKLEHIMYNIN.

In terms of assembly, component of the Clr4 methyltransferase complex (ClrC) composed of at least clr4, rik1, pcu4, rbx1, raf1 and raf2. The cullin pcu4, rik1, raf1, raf2 and the ring-box protein rbx1 are components of an E3 ubiquitin ligase, whose activity is essential for heterochromatin assembly. Interacts with pcu4.

It localises to the cytoplasm. Its subcellular location is the mitochondrion. It is found in the nucleus. The protein localises to the chromosome. Its function is as follows. Component of the Clr4 methyltransferase complex (ClrC) which contributes to the establishment of heterochromatin by specifically methylating histone H3 to form H3K9me. ClrC preferentially ubiquitylates H3K14 and ClrC-mediated H3 ubiquitination promotes clr4 methyltransferase activity for the methylation of H3K9. H3K9me represents a specific tag for epigenetic transcriptional repression by recruiting swi6/HP1 to methylated histones which leads to transcriptional silencing within centromeric heterochromatin, telomeric regions and at the silent mating-type loci. Has a role in both mitotic and meiotic chromosome segregation. This chain is Rik1-associated factor 2 (raf2), found in Schizosaccharomyces pombe (strain 972 / ATCC 24843) (Fission yeast).